A 364-amino-acid chain; its full sequence is MVQSAVTHFRPVMILAGGTGGHIFPGLAVAGVLRARGVPVVWLGAAGKMETHLVPKHGIEIQTIAVSGVRGHGMLALLGAPVRVLPAIFAAMRVLRRYRPRVVVSFGGFAAGPGGIAARLMGLPLIVHEQNRAPGMTNRVLARVARRVLSGFPGSFVAEEVVGNPVRKDIAALPAPGVRFAGRSGPVRLLVLGGSQGARVMNNALPVVLRVLSDSDVAVEVRHQCGEALRAETEGAYAYAGVAARVEPFISDMAAAYSWADLVVCRAGASTLAELCAAGVGSVLIPFPAAVDDHQRRNAEYLVAAGAALLLQQQDRAFYVYLESVLRDLLSNPMRRLAMAEAARGLAKSDAAECIAEIILKESI.

UDP-N-acetyl-alpha-D-glucosamine is bound by residues Thr-19–Gly-21, Asn-131, Arg-167, Ser-195, Ile-250, and Gln-295.

Belongs to the glycosyltransferase 28 family. MurG subfamily.

It localises to the cell inner membrane. The catalysed reaction is di-trans,octa-cis-undecaprenyl diphospho-N-acetyl-alpha-D-muramoyl-L-alanyl-D-glutamyl-meso-2,6-diaminopimeloyl-D-alanyl-D-alanine + UDP-N-acetyl-alpha-D-glucosamine = di-trans,octa-cis-undecaprenyl diphospho-[N-acetyl-alpha-D-glucosaminyl-(1-&gt;4)]-N-acetyl-alpha-D-muramoyl-L-alanyl-D-glutamyl-meso-2,6-diaminopimeloyl-D-alanyl-D-alanine + UDP + H(+). Its pathway is cell wall biogenesis; peptidoglycan biosynthesis. Functionally, cell wall formation. Catalyzes the transfer of a GlcNAc subunit on undecaprenyl-pyrophosphoryl-MurNAc-pentapeptide (lipid intermediate I) to form undecaprenyl-pyrophosphoryl-MurNAc-(pentapeptide)GlcNAc (lipid intermediate II). This is UDP-N-acetylglucosamine--N-acetylmuramyl-(pentapeptide) pyrophosphoryl-undecaprenol N-acetylglucosamine transferase from Xylella fastidiosa (strain Temecula1 / ATCC 700964).